A 768-amino-acid polypeptide reads, in one-letter code: WD repeat-containing protein 20 homolog (768 aa).

The segment at 103–122 (ESPEAVAPTSSTYEHHKNEP) is disordered. 4 WD repeats span residues 224–264 (IEKT…ASSN), 302–342 (IGEG…LLAV), 345–384 (SYFG…VVCR), and 454–497 (CSLA…LNQG). The interval 531 to 608 (VSPGGAGVNA…VNSESSKKQN (78 aa)) is disordered. The segment covering 539–553 (NASSDSQSITNNHTT) has biased composition (polar residues). Residues 570–582 (FSKFTSGSSSATS) show a composition bias toward low complexity. Positions 595–608 (NGASVNSESSKKQN) are enriched in polar residues. Residues 646 to 683 (VSHDRLTVLEFREDCVVTACQEGYICTWGRPGRYQPKR) form a WD 5 repeat. Residues 684 to 749 (DCINSPGTAS…PNITSPSYRV (66 aa)) form a disordered region. Residues 688-712 (SPGTASPESGQKPSGSTSAMTSSYG) show a composition bias toward polar residues. A compositionally biased stretch (low complexity) spans 724–733 (SRSSSTYSNS). A compositionally biased stretch (polar residues) spans 734–749 (EQQLRSPNITSPSYRV).

As to quaternary structure, interacts with usp-46; the interaction increases the catalytic activity of usp-46 in the presence of wdr-48. Expressed in several neurons in the head and tail.

Together with wdr-48, binds to and stimulates the activity of the deubiquitinating enzyme usp-46, leading to deubiquitination and stabilization of the glr-1 glutamate receptor. In Caenorhabditis elegans, this protein is WD repeat-containing protein 20 homolog.